Reading from the N-terminus, the 119-residue chain is Ribonuclease P protein component (119 aa).

The protein belongs to the RnpA family. As to quaternary structure, consists of a catalytic RNA component (M1 or rnpB) and a protein subunit.

The catalysed reaction is Endonucleolytic cleavage of RNA, removing 5'-extranucleotides from tRNA precursor.. Functionally, RNaseP catalyzes the removal of the 5'-leader sequence from pre-tRNA to produce the mature 5'-terminus. It can also cleave other RNA substrates such as 4.5S RNA. The protein component plays an auxiliary but essential role in vivo by binding to the 5'-leader sequence and broadening the substrate specificity of the ribozyme. The polypeptide is Ribonuclease P protein component (Salmonella schwarzengrund (strain CVM19633)).